We begin with the raw amino-acid sequence, 397 residues long: Elongation factor Tu (397 aa).

Positions 10 to 206 (KPHVNIGTIG…AVDEYIPTPE (197 aa)) constitute a tr-type G domain. Residues 19 to 26 (GHVDHGKT) form a G1 region. 19-26 (GHVDHGKT) contacts GTP. T26 is a Mg(2+) binding site. Positions 60 to 64 (GITIS) are G2. Residues 81–84 (DCPG) are G3. GTP contacts are provided by residues 81 to 85 (DCPGH) and 136 to 139 (NKAD). The G4 stretch occupies residues 136-139 (NKAD). The G5 stretch occupies residues 174 to 176 (SAL).

Belongs to the TRAFAC class translation factor GTPase superfamily. Classic translation factor GTPase family. EF-Tu/EF-1A subfamily. In terms of assembly, monomer.

It is found in the cytoplasm. It catalyses the reaction GTP + H2O = GDP + phosphate + H(+). GTP hydrolase that promotes the GTP-dependent binding of aminoacyl-tRNA to the A-site of ribosomes during protein biosynthesis. The protein is Elongation factor Tu of Clostridium tetani (strain Massachusetts / E88).